The chain runs to 116 residues: Host cell factor C1 regulator 1 (116 aa).

Residues 1–22 form a disordered region; the sequence is MILQQPLERGPPGRDPRATTGV. The interaction with HCFC1 stretch occupies residues 54–57; sequence DHPY. The Nuclear export signal motif lies at 88-97; sequence IPEALRLLRL.

In terms of assembly, interacts with HCFC1.

It localises to the cytoplasm. The protein resides in the nucleus. Functionally, regulates HCFC1 activity by modulating its subcellular localization. Overexpression of HCFC1R1 leads to accumulation of HCFC1 in the cytoplasm. HCFC1R1-mediated export may provide the pool of cytoplasmic HCFC1 required for import of virion-derived VP16 into the nucleus. The sequence is that of Host cell factor C1 regulator 1 (Hcfc1r1) from Rattus norvegicus (Rat).